The chain runs to 6199 residues: Adhesion G-protein coupled receptor V1 (6199 aa).

The N-terminal stretch at 1 to 23 is a signal peptide; sequence MPAVLALSGLLLMLLTVSVRSES. Calx-beta domains are found at residues 24–109, 126–230, 249–355, 380–480, 637–737, 753–853, 869–972, 997–1083, 1099–1199, 1434–1534, 1563–1655, 1835–1937, 1963–2063, 2092–2190, 2208–2308, 2425–2525, 2582–2659, 2673–2773, 2814–2908, 2931–3029, and 3054–3154; these read AELR…VFIL, ATIT…VQLT, ISRN…QVVL, DKPY…LKLI, PDIA…ILTL, SREI…VVLS, NITV…ITLL, IYFA…YIVL, TVVI…LRLM, PIPG…FYLQ, GLFS…RVRL, IIVT…VRLT, LFVF…FLEL, QVII…RIEL, ITIL…KVEL, AAFC…FIIK, VREE…QIGL, DTVT…RVIL, PSSL…LVNI, EIII…QLIL, and GHGI…TVTL. Residues 24–5803 lie on the Extracellular side of the membrane; it reads AELRFQGQTQ…IESLASFNEA (5780 aa). 6 EAR repeats span residues 3239-3284, 3285-3333, 3336-3372, 3374-3420, 3422-3467, and 3471-3513; these read VLAV…KWQG, VFVP…RVQA, NLTL…VWNR, SFFL…QWTD, RFQN…LWGS, and VFQQ…SWRS. Calx-beta domains lie at 3562–3605, 3619–3719, 3778–3854, 3916–3985, 4000–4103, 4120–4220, 4247–4335, 4371–4471, 4493–4593, 4615–4715, 4993–5076, 5125–5225, and 5260–5360; these read SNQS…RVSL, QVTF…TIVL, ITLS…FVNI, VLRL…MVKL, VVVS…IQLL, VVIR…QLRL, HGLF…FLNI, VIIQ…LQLT, DSPN…IIML, KFGD…TLRL, QHLV…VNLT, SEDS…IYLS, and VGFS…LVEV. Positions 5636 to 5801 constitute a GAIN-B domain; it reads PYFTIAAHHW…AEIESLASFN (166 aa). Intrachain disulfides connect Cys-5751–Cys-5780 and Cys-5768–Cys-5782. The GPS stretch occupies residues 5751–5801; the sequence is CLLWNQAAESWLSDGQFCRLVDDTQNYVECACSHLSIYTAYAEIESLASFN. The helical transmembrane segment at 5804–5824 threads the bilayer; sequence FYAAGFICISGFALAMVSHLM. The Cytoplasmic portion of the chain corresponds to 5825 to 5834; sequence CARFLMFAAK. A helical membrane pass occupies residues 5835-5855; it reads LLTHMMVACLGTQICFLVSAF. At 5856–5864 the chain is on the extracellular side; it reads RGRMFSEDS. The helical transmembrane segment at 5865-5885 threads the bilayer; the sequence is CAALGLFFHYFHLSQFGWMLV. At 5886-5908 the chain is on the cytoplasmic side; that stretch reads QAINFWQILVMNDEHTERRYLLY. The helical transmembrane segment at 5909–5929 threads the bilayer; it reads FLLSWGLPALVIIVLVVVLLG. Residues 5930-5954 are Extracellular-facing; that stretch reads GFGWSIHSVYGLVQGDLCFIPNVYA. Residues 5955–5975 traverse the membrane as a helical segment; it reads ALCTAALVPLICLVGVLVIFI. At 5976–6001 the chain is on the cytoplasmic side; sequence HAYQVTQQWKAYDDIYRGRTNSSEVP. A helical transmembrane segment spans residues 6002-6022; sequence MMLYLFALVTLVCVWAGLHMA. The Extracellular portion of the chain corresponds to 6023 to 6025; the sequence is YRY. Residues 6026 to 6046 form a helical membrane-spanning segment; the sequence is IWMLILLVIFNIFLGLYVFSV. At 6047–6199 the chain is on the cytoplasmic side; sequence YFVMHNQLFW…RRIPIADTHL (153 aa).

It belongs to the G-protein coupled receptor 2 family. Adhesion G-protein coupled receptor (ADGR) subfamily. Heterodimer of 2 chains generated by proteolytic processing; the large extracellular N-terminal fragment and the membrane-bound C-terminal fragment predominantly remain associated and non-covalently linked. In terms of processing, autoproteolytically processed at the GPS region of the GAIN-B domain; this cleavage modulates receptor activity.

It is found in the cell membrane. It localises to the cell projection. Its subcellular location is the stereocilium membrane. The protein resides in the photoreceptor inner segment. In terms of biological role, receptor that may have an important role in the development of the sensory nervous system. This is Adhesion G-protein coupled receptor V1 (adgrv1) from Danio rerio (Zebrafish).